The following is a 920-amino-acid chain: Neurofibromin-A (920 aa).

One can recognise a Ras-GAP domain in the interval N63–I291. Disordered stretches follow at residues K344–A405 and L477–M508. Positions L346–K369 are enriched in polar residues. Residues S370–A405 show a composition bias toward low complexity. Polar residues predominate over residues P498 to S507. The CRAL-TRIO domain occupies F512–Y673.

Functionally, regulator of the GTPase activity of Ras, mainly RasG and RasB. In Dictyostelium discoideum (Social amoeba), this protein is Neurofibromin-A (nfaA).